The following is a 601-amino-acid chain: Elongation factor 4 (601 aa).

Positions 7–189 constitute a tr-type G domain; the sequence is DTIRNFSIVA…AIVAKLPPPK (183 aa). Residues 19–24 and 136–139 each bind GTP; these read DHGKST and NKID.

It belongs to the TRAFAC class translation factor GTPase superfamily. Classic translation factor GTPase family. LepA subfamily.

The protein resides in the cell inner membrane. It carries out the reaction GTP + H2O = GDP + phosphate + H(+). Functionally, required for accurate and efficient protein synthesis under certain stress conditions. May act as a fidelity factor of the translation reaction, by catalyzing a one-codon backward translocation of tRNAs on improperly translocated ribosomes. Back-translocation proceeds from a post-translocation (POST) complex to a pre-translocation (PRE) complex, thus giving elongation factor G a second chance to translocate the tRNAs correctly. Binds to ribosomes in a GTP-dependent manner. The chain is Elongation factor 4 from Methylobacterium nodulans (strain LMG 21967 / CNCM I-2342 / ORS 2060).